The following is a 440-amino-acid chain: 23S rRNA (uracil(1939)-C(5))-methyltransferase RlmD (440 aa).

A TRAM domain is found at 6–64 (PIHNAQPEQVFIESLDTEGRGIARVEGKVLFVDGALPGERVWARRTQNHKSFDRAELLQ). Positions 77, 83, 86, and 164 each coordinate [4Fe-4S] cluster. The S-adenosyl-L-methionine site is built by Gln-273, Phe-302, Asn-307, Glu-323, Asp-351, and Asp-372. Cys-397 functions as the Nucleophile in the catalytic mechanism.

The protein belongs to the class I-like SAM-binding methyltransferase superfamily. RNA M5U methyltransferase family. RlmD subfamily.

The catalysed reaction is uridine(1939) in 23S rRNA + S-adenosyl-L-methionine = 5-methyluridine(1939) in 23S rRNA + S-adenosyl-L-homocysteine + H(+). Its function is as follows. Catalyzes the formation of 5-methyl-uridine at position 1939 (m5U1939) in 23S rRNA. The sequence is that of 23S rRNA (uracil(1939)-C(5))-methyltransferase RlmD from Acidithiobacillus ferrooxidans (strain ATCC 23270 / DSM 14882 / CIP 104768 / NCIMB 8455) (Ferrobacillus ferrooxidans (strain ATCC 23270)).